Reading from the N-terminus, the 48-residue chain is Putative ATP synthase protein 8-like protein (48 aa).

A helical transmembrane segment spans residues 17–37 (GFLVILLTLLLLSYAFLSMIL).

This sequence belongs to the ATPase protein 8 family.

Its subcellular location is the membrane. This chain is Putative ATP synthase protein 8-like protein, found in Eremothecium gossypii (strain ATCC 10895 / CBS 109.51 / FGSC 9923 / NRRL Y-1056) (Yeast).